Reading from the N-terminus, the 132-residue chain is Phosphoribosyl-AMP cyclohydrolase (132 aa).

Aspartate 81 is a binding site for Mg(2+). Cysteine 82 contributes to the Zn(2+) binding site. The Mg(2+) site is built by aspartate 83 and aspartate 85. Zn(2+) is bound by residues cysteine 99 and cysteine 106.

It belongs to the PRA-CH family. As to quaternary structure, homodimer. Mg(2+) serves as cofactor. Zn(2+) is required as a cofactor.

It is found in the cytoplasm. It catalyses the reaction 1-(5-phospho-beta-D-ribosyl)-5'-AMP + H2O = 1-(5-phospho-beta-D-ribosyl)-5-[(5-phospho-beta-D-ribosylamino)methylideneamino]imidazole-4-carboxamide. The protein operates within amino-acid biosynthesis; L-histidine biosynthesis; L-histidine from 5-phospho-alpha-D-ribose 1-diphosphate: step 3/9. In terms of biological role, catalyzes the hydrolysis of the adenine ring of phosphoribosyl-AMP. The polypeptide is Phosphoribosyl-AMP cyclohydrolase (Chromobacterium violaceum (strain ATCC 12472 / DSM 30191 / JCM 1249 / CCUG 213 / NBRC 12614 / NCIMB 9131 / NCTC 9757 / MK)).